Here is a 121-residue protein sequence, read N- to C-terminus: Large ribosomal subunit protein uL18 (121 aa).

This sequence belongs to the universal ribosomal protein uL18 family. Part of the 50S ribosomal subunit; part of the 5S rRNA/L5/L18/L25 subcomplex. Contacts the 5S and 23S rRNAs.

In terms of biological role, this is one of the proteins that bind and probably mediate the attachment of the 5S RNA into the large ribosomal subunit, where it forms part of the central protuberance. The sequence is that of Large ribosomal subunit protein uL18 from Caldanaerobacter subterraneus subsp. tengcongensis (strain DSM 15242 / JCM 11007 / NBRC 100824 / MB4) (Thermoanaerobacter tengcongensis).